The primary structure comprises 123 residues: Large ribosomal subunit protein bL12 (123 aa).

It belongs to the bacterial ribosomal protein bL12 family. In terms of assembly, homodimer. Part of the ribosomal stalk of the 50S ribosomal subunit. Forms a multimeric L10(L12)X complex, where L10 forms an elongated spine to which 2 to 4 L12 dimers bind in a sequential fashion. Binds GTP-bound translation factors.

Forms part of the ribosomal stalk which helps the ribosome interact with GTP-bound translation factors. Is thus essential for accurate translation. The chain is Large ribosomal subunit protein bL12 from Shewanella amazonensis (strain ATCC BAA-1098 / SB2B).